Reading from the N-terminus, the 387-residue chain is Peroxisomal membrane protein LPX1 (387 aa).

The peroxisomal targeting signal type 1 stretch occupies residues 385–387; that stretch reads QKL.

The protein resides in the peroxisome matrix. In terms of biological role, has acyl esterase, lipase and phospholipase A activity. In Saccharomyces cerevisiae (strain ATCC 204508 / S288c) (Baker's yeast), this protein is Peroxisomal membrane protein LPX1 (LPX1).